A 250-amino-acid chain; its full sequence is Tripartite motif-containing protein 73 (250 aa).

The RING-type zinc finger occupies 16-57 (CPICLEVFKESLMLQCGHSYCKGCLVSLSYHLDTKVRCPMCW). A B box-type zinc finger spans residues 84–125 (PEPKVCVHHRNPLSLFCEKDQELICGLCGLLGSHQHHPVTPV). Positions 89, 92, 111, and 117 each coordinate Zn(2+). Coiled-coil stretches lie at residues 125–169 (VSTV…NESD) and 204–235 (LVAS…FGNE).

It belongs to the TRIM/RBCC family.

This chain is Tripartite motif-containing protein 73 (TRIM73), found in Homo sapiens (Human).